We begin with the raw amino-acid sequence, 116 residues long: MSQQLLEELGRRQYRTDIPEFRVGDTVRVGVKVVEGNRERVQDFEGVVIRRRGEGINENFTVRRIASHGIGVERTFLLHAPRIDYIKVIRQGKVRRAKLYYLRGRTGKAARIRERR.

It belongs to the bacterial ribosomal protein bL19 family.

In terms of biological role, this protein is located at the 30S-50S ribosomal subunit interface and may play a role in the structure and function of the aminoacyl-tRNA binding site. This Chloroflexus aggregans (strain MD-66 / DSM 9485) protein is Large ribosomal subunit protein bL19.